The sequence spans 189 residues: Elongation factor P (189 aa).

Belongs to the elongation factor P family.

Its subcellular location is the cytoplasm. The protein operates within protein biosynthesis; polypeptide chain elongation. Involved in peptide bond synthesis. Stimulates efficient translation and peptide-bond synthesis on native or reconstituted 70S ribosomes in vitro. Probably functions indirectly by altering the affinity of the ribosome for aminoacyl-tRNA, thus increasing their reactivity as acceptors for peptidyl transferase. This chain is Elongation factor P, found in Pseudomonas syringae pv. tomato (strain ATCC BAA-871 / DC3000).